Consider the following 108-residue polypeptide: UPF0060 membrane protein sll0793 (108 aa).

4 consecutive transmembrane segments (helical) span residues 7 to 27 (LYFVMAGLCEIGGGYLVWLWI), 32 to 52 (SVWLALVRAILLTVYGFVATL), 64 to 84 (YGGIFIILSIIWGWQVDNVVV), and 86 to 106 (RLDWLGAAIALVGVLVMMYAN).

The protein belongs to the UPF0060 family.

It localises to the cell inner membrane. The polypeptide is UPF0060 membrane protein sll0793 (Synechocystis sp. (strain ATCC 27184 / PCC 6803 / Kazusa)).